Consider the following 441-residue polypeptide: Ribulose bisphosphate carboxylase large chain (441 aa).

Substrate contacts are provided by asparagine 89 and threonine 139. Lysine 141 serves as the catalytic Proton acceptor. Substrate is bound at residue lysine 143. The Mg(2+) site is built by lysine 167, aspartate 169, and glutamate 170. Lysine 167 is modified (N6-carboxylysine). The active-site Proton acceptor is the histidine 260. 3 residues coordinate substrate: residue 261, histidine 293, and serine 345.

Belongs to the RuBisCO large chain family. Type I subfamily. As to quaternary structure, heterohexadecamer of 8 large chains and 8 small chains; disulfide-linked. The disulfide link is formed within the large subunit homodimers. Mg(2+) is required as a cofactor. The disulfide bond which can form in the large chain dimeric partners within the hexadecamer appears to be associated with oxidative stress and protein turnover.

It is found in the plastid. The protein resides in the chloroplast. It catalyses the reaction 2 (2R)-3-phosphoglycerate + 2 H(+) = D-ribulose 1,5-bisphosphate + CO2 + H2O. It carries out the reaction D-ribulose 1,5-bisphosphate + O2 = 2-phosphoglycolate + (2R)-3-phosphoglycerate + 2 H(+). Functionally, ruBisCO catalyzes two reactions: the carboxylation of D-ribulose 1,5-bisphosphate, the primary event in carbon dioxide fixation, as well as the oxidative fragmentation of the pentose substrate in the photorespiration process. Both reactions occur simultaneously and in competition at the same active site. The protein is Ribulose bisphosphate carboxylase large chain of Apocynum cannabinum (Hemp dogbane).